The primary structure comprises 278 residues: Biotin synthase (278 aa).

The Radical SAM core domain maps to 1 to 227 (MQIMLCAISN…QSVVMVAGGR (227 aa)). Residues Cys-16, Cys-20, and Cys-23 each contribute to the [4Fe-4S] cluster site. [2Fe-2S] cluster is bound by residues Cys-60, Cys-95, and Cys-153.

This sequence belongs to the radical SAM superfamily. Biotin synthase family. Homodimer. [4Fe-4S] cluster serves as cofactor. [2Fe-2S] cluster is required as a cofactor.

It catalyses the reaction (4R,5S)-dethiobiotin + (sulfur carrier)-SH + 2 reduced [2Fe-2S]-[ferredoxin] + 2 S-adenosyl-L-methionine = (sulfur carrier)-H + biotin + 2 5'-deoxyadenosine + 2 L-methionine + 2 oxidized [2Fe-2S]-[ferredoxin]. Its pathway is cofactor biosynthesis; biotin biosynthesis; biotin from 7,8-diaminononanoate: step 2/2. Functionally, catalyzes the conversion of dethiobiotin (DTB) to biotin by the insertion of a sulfur atom into dethiobiotin via a radical-based mechanism. This Campylobacter jejuni subsp. jejuni serotype O:23/36 (strain 81-176) protein is Biotin synthase.